The following is a 270-amino-acid chain: Mlc titration factor A (270 aa).

Zn(2+) is bound by residues His-111, His-148, His-152, and Glu-211.

The protein belongs to the MtfA family. Interacts with Mlc. Zn(2+) is required as a cofactor.

It localises to the cytoplasm. Its function is as follows. Involved in the modulation of the activity of the glucose-phosphotransferase system (glucose-PTS). Interacts with the transcriptional repressor Mlc, preventing its interaction with DNA and leading to the modulation of expression of genes regulated by Mlc, including ptsG, which encodes the PTS system glucose-specific EIICB component. Shows zinc-dependent metallopeptidase activity. The sequence is that of Mlc titration factor A from Yersinia pestis bv. Antiqua (strain Nepal516).